Reading from the N-terminus, the 301-residue chain is MKIAVLSRNPRLYSTRRLVEAGIQRGHEMVVIDTLRAYMNIASHKPQIHYRGKPLEGFDAVIPRIGASVTFYGCAVLRQFEMMGVYPLNESVAIARSRDKLRSLQLLSRRGIGLPITGFAHSPDDIPDLIQMVNGAPLVIKVLEGTQGIGVVLCETTQAAESVIEAFMGLKQNIMVQEYIKEAGGADIRCFVVGDKVIASMKRQAKPGEFRSNLHRGGVASLIKITPEERITAIRAAKVMGLSVAGVDILRSNHGPLVMEVNSSPGLEGIEVTTGKNVAGMIIEHLEKNGGPNQTRTKGKG.

Residues Leu-104–Glu-287 enclose the ATP-grasp domain. Residues Lys-141, Glu-178–Tyr-179, Asp-187, and Arg-211–Asn-213 each bind ATP. Mg(2+) is bound by residues Asp-248, Glu-260, and Asn-262. Mn(2+)-binding residues include Asp-248, Glu-260, and Asn-262.

The protein belongs to the RimK family. The cofactor is Mg(2+). It depends on Mn(2+) as a cofactor.

The polypeptide is Probable alpha-L-glutamate ligase (Pseudomonas putida (strain GB-1)).